The following is a 267-amino-acid chain: tRNA pseudouridine synthase A (267 aa).

D55 (nucleophile) is an active-site residue. Y109 contributes to the substrate binding site.

It belongs to the tRNA pseudouridine synthase TruA family.

It catalyses the reaction uridine(38/39/40) in tRNA = pseudouridine(38/39/40) in tRNA. In terms of biological role, formation of pseudouridine at positions 38, 39 and 40 in the anticodon stem and loop of transfer RNAs. The sequence is that of tRNA pseudouridine synthase A from Natronomonas pharaonis (strain ATCC 35678 / DSM 2160 / CIP 103997 / JCM 8858 / NBRC 14720 / NCIMB 2260 / Gabara) (Halobacterium pharaonis).